The chain runs to 379 residues: tRNA (guanine(26)-N(2))-dimethyltransferase (379 aa).

Positions 1–26 are disordered; the sequence is MECREITEGSTTFTAPVQDETTQFPP. The Trm1 methyltransferase domain maps to 4–369; the sequence is REITEGSTTF…APLPLIEEKI (366 aa). The segment covering 8 to 25 has biased composition (polar residues); sequence EGSTTFTAPVQDETTQFP. The S-adenosyl-L-methionine site is built by Arg-41, Arg-66, Asp-82, Asp-108, and Ala-109. Cys-237, Cys-240, Cys-257, and Cys-260 together coordinate Zn(2+).

Belongs to the class I-like SAM-binding methyltransferase superfamily. Trm1 family.

The catalysed reaction is guanosine(26) in tRNA + 2 S-adenosyl-L-methionine = N(2)-dimethylguanosine(26) in tRNA + 2 S-adenosyl-L-homocysteine + 2 H(+). Functionally, dimethylates a single guanine residue at position 26 of a number of tRNAs using S-adenosyl-L-methionine as donor of the methyl groups. The chain is tRNA (guanine(26)-N(2))-dimethyltransferase from Methanocorpusculum labreanum (strain ATCC 43576 / DSM 4855 / Z).